A 499-amino-acid polypeptide reads, in one-letter code: Salviol synthase (499 aa).

A helical membrane pass occupies residues 4 to 24; that stretch reads HIPSLVLCISFFIFFKIVSKL. Cysteine 436 serves as a coordination point for heme.

Belongs to the cytochrome P450 family. The cofactor is heme. As to expression, expressed in leaf glandular trichomes.

The protein resides in the membrane. It catalyses the reaction ferruginol + reduced [NADPH--hemoprotein reductase] + O2 = salviol + oxidized [NADPH--hemoprotein reductase] + H2O + H(+). Its pathway is secondary metabolite biosynthesis; terpenoid biosynthesis. In terms of biological role, monooxygenase involved in the biosynthesis of labdane-related diterpenes natural products. Catalyzes the oxidation of ferruginol to produce salviol. Salviol is an intermediate in the biosynthesis of carnosate, a potent antioxidant. The protein is Salviol synthase of Salvia pomifera (Apple sage).